We begin with the raw amino-acid sequence, 187 residues long: UPF0301 protein YqgE (187 aa).

The protein belongs to the UPF0301 (AlgH) family.

The polypeptide is UPF0301 protein YqgE (Salmonella paratyphi A (strain ATCC 9150 / SARB42)).